We begin with the raw amino-acid sequence, 239 residues long: Ribonuclease PH (239 aa).

Phosphate-binding positions include arginine 86 and 124-126 (GTR).

Belongs to the RNase PH family. In terms of assembly, homohexameric ring arranged as a trimer of dimers.

It catalyses the reaction tRNA(n+1) + phosphate = tRNA(n) + a ribonucleoside 5'-diphosphate. In terms of biological role, phosphorolytic 3'-5' exoribonuclease that plays an important role in tRNA 3'-end maturation. Removes nucleotide residues following the 3'-CCA terminus of tRNAs; can also add nucleotides to the ends of RNA molecules by using nucleoside diphosphates as substrates, but this may not be physiologically important. Probably plays a role in initiation of 16S rRNA degradation (leading to ribosome degradation) during starvation. The protein is Ribonuclease PH of Azoarcus sp. (strain BH72).